The following is a 98-amino-acid chain: MPSISTNITLAFTIALTGMLVFRSHLMSSLLCLEGMMLAMFILSILFIMNLHYTVSFIMPILLLVLAACEAAIGLALLVMVSNTYGLDHIQNLNLLQC.

3 helical membrane-spanning segments follow: residues 2–22 (PSIS…MLVF), 29–49 (SLLC…LFIM), and 61–81 (ILLL…LVMV).

Belongs to the complex I subunit 4L family. Core subunit of respiratory chain NADH dehydrogenase (Complex I) which is composed of 45 different subunits.

The protein resides in the mitochondrion inner membrane. The enzyme catalyses a ubiquinone + NADH + 5 H(+)(in) = a ubiquinol + NAD(+) + 4 H(+)(out). Functionally, core subunit of the mitochondrial membrane respiratory chain NADH dehydrogenase (Complex I) which catalyzes electron transfer from NADH through the respiratory chain, using ubiquinone as an electron acceptor. Part of the enzyme membrane arm which is embedded in the lipid bilayer and involved in proton translocation. The protein is NADH-ubiquinone oxidoreductase chain 4L (MT-ND4L) of Lepilemur sahamalazensis (Sahamalaza sportive lemur).